The chain runs to 593 residues: UvrABC system protein C (593 aa).

In terms of domain architecture, GIY-YIG spans 13–91 (TTPGVYMMKD…IKEYRPKYNV (79 aa)). The region spanning 202–237 (DEIVEELKKKMFEYADNLMFEKAQEIKNKITSLEQI) is the UVR domain.

The protein belongs to the UvrC family. In terms of assembly, interacts with UvrB in an incision complex.

The protein localises to the cytoplasm. In terms of biological role, the UvrABC repair system catalyzes the recognition and processing of DNA lesions. UvrC both incises the 5' and 3' sides of the lesion. The N-terminal half is responsible for the 3' incision and the C-terminal half is responsible for the 5' incision. The chain is UvrABC system protein C from Caldicellulosiruptor saccharolyticus (strain ATCC 43494 / DSM 8903 / Tp8T 6331).